The sequence spans 546 residues: DNA replication factor Cdt1 (546 aa).

Over residues 1-11 (MEQRRVTDFFA) the composition is skewed to basic and acidic residues. The PIP-box K+4 motif motif lies at 1–23 (MEQRRVTDFFARRRPGPPRIAPP). Disordered regions lie at residues 1–118 (MEQR…QDQD) and 143–165 (SAQDAGESCTPEAEGRPEEPCGE). A compositionally biased stretch (low complexity) spans 28-45 (RTPSPARPALRAPASATS). Phosphothreonine; by MAPK8 is present on Thr-29. The residue at position 31 (Ser-31) is a Phosphoserine. The Cyclin-binding motif motif lies at 68–70 (RRL). The residue at position 93 (Ser-93) is a Phosphoserine; by MAPK8. Residues 150–190 (SCTPEAEGRPEEPCGEKAPAYQRFHALAQPGLPGLVLPYKY) form an interaction with GMNN region. Positions 155–164 (AEGRPEEPCG) are enriched in basic and acidic residues. At Ser-318 the chain carries Phosphoserine; by MAPK8. 2 positions are modified to phosphoserine: Ser-380 and Ser-394. The segment at 383-415 (ALRSAAPSSPGSPRPALPATPPATPPAASPSAL) is disordered. Positions 392–410 (PGSPRPALPATPPATPPAA) are enriched in pro residues. The segment at 451–546 (LERLPELARV…AHQTRAEEGL (96 aa)) is interaction with LRWD1.

The protein belongs to the Cdt1 family. As to quaternary structure, interacts with GMNN; the interaction inhibits binding of the MCM complex to origins of replication. Interacts with MCM6. Interacts with CDC6; are mutually dependent on one another for loading MCM complexes onto chromatin. Interacts with PCNA. Interacts with LRWD1 during G1 phase and during mitosis. Interacts with NDC80 subunit of the NDC80 complex; leading to kinetochore localization. Interacts with GRWD1; origin binding of GRWD1 is dependent on CDT1. Interacts with KAT7. Interacts with ubiquitin-binding protein FAF1; the interaction is likely to promote CDT1 degradation. In terms of processing, two independent E3 ubiquitin ligase complexes, SCF(SKP2) and the DCX(DTL) complex, mediated CDT1 degradation in S phase. Ubiquitinated by the DCX(DTL) complex, in response to DNA damage, leading to its degradation. Ubiquitination by the DCX(DTL) complex is necessary to ensure proper cell cycle regulation and is PCNA-dependent: interacts with PCNA via its PIP-box, while the presence of the containing the 'K+4' motif in the PIP box, recruit the DCX(DTL) complex, leading to its degradation. Phosphorylation at Thr-29 by CDK2 targets CDT1 for ubiquitination by SCF(SKP2) E3 ubiquitin ligase and subsequent degradation. The interaction with GMNN protects it against ubiquitination. Deubiquitinated by USP37. Ubiquitinated and degraded by the SCF(FBXO31) complex during the G2 phase to prevent re-replication. Phosphorylation by cyclin A-dependent kinases at Thr-29 targets CDT1 for ubiquitynation by SCF(SKP2) E3 ubiquitin ligase and subsequent degradation. Phosphorylated at Thr-29 by MAPK8/JNK1, which blocks replication licensing in response to stress. Binding to GMNN is not affected by phosphorylation.

It localises to the nucleus. It is found in the chromosome. The protein resides in the centromere. Its subcellular location is the kinetochore. Functionally, required for both DNA replication and mitosis. DNA replication licensing factor, required for pre-replication complex assembly. Cooperates with CDC6 and the origin recognition complex (ORC) during G1 phase of the cell cycle to promote the loading of the mini-chromosome maintenance (MCM) complex onto DNA to generate pre-replication complexes (pre-RC). Required also for mitosis by promoting stable kinetochore-microtubule attachments. Potential oncogene. The sequence is that of DNA replication factor Cdt1 from Homo sapiens (Human).